We begin with the raw amino-acid sequence, 201 residues long: MSSLRQSEIKRKTNETDISVFINLDGNGISEIETGIPFLDHMLHQISSHGLFDLKIKAIGDTHIDDHHTNEDVGIALGKAFSKALGERKGISRFGHFFAPLDEALVQVTLDCSGRPHLSYDLQLKAPRIGNYDTELVKEFFIAFVNNSGITLHINQIRGSNSHHIVEACFKAFSRAMRMATEIDLRRSDSIPSSKGMLENQ.

Belongs to the imidazoleglycerol-phosphate dehydratase family.

It is found in the cytoplasm. The enzyme catalyses D-erythro-1-(imidazol-4-yl)glycerol 3-phosphate = 3-(imidazol-4-yl)-2-oxopropyl phosphate + H2O. It participates in amino-acid biosynthesis; L-histidine biosynthesis; L-histidine from 5-phospho-alpha-D-ribose 1-diphosphate: step 6/9. In Prochlorococcus marinus subsp. pastoris (strain CCMP1986 / NIES-2087 / MED4), this protein is Imidazoleglycerol-phosphate dehydratase.